The chain runs to 323 residues: Beta-ketoacyl-[acyl-carrier-protein] synthase III (323 aa).

Residues cysteine 113 and histidine 250 contribute to the active site. The ACP-binding stretch occupies residues 251 to 255; sequence QANKR. Asparagine 280 is a catalytic residue.

Belongs to the thiolase-like superfamily. FabH family. As to quaternary structure, homodimer.

Its subcellular location is the cytoplasm. The catalysed reaction is malonyl-[ACP] + acetyl-CoA + H(+) = 3-oxobutanoyl-[ACP] + CO2 + CoA. The protein operates within lipid metabolism; fatty acid biosynthesis. Its function is as follows. Catalyzes the condensation reaction of fatty acid synthesis by the addition to an acyl acceptor of two carbons from malonyl-ACP. Catalyzes the first condensation reaction which initiates fatty acid synthesis and may therefore play a role in governing the total rate of fatty acid production. Possesses both acetoacetyl-ACP synthase and acetyl transacylase activities. Its substrate specificity determines the biosynthesis of branched-chain and/or straight-chain of fatty acids. This is Beta-ketoacyl-[acyl-carrier-protein] synthase III from Mesorhizobium japonicum (strain LMG 29417 / CECT 9101 / MAFF 303099) (Mesorhizobium loti (strain MAFF 303099)).